Here is a 185-residue protein sequence, read N- to C-terminus: MLEDVIKETNDKLRSSYEVFLSDLKGIRSGSLSVSILDGVIVSTHMGKLRLNQVASLSVVNNKMLSVQVWDKSTVGAVKDAILTSNLGMNPIVEGSVLRLPVPDLTEERRKELVKVLKKYGDRAKVAVRNIRRDAISRIKVLEKAKEISENDMHALLKKIDKIISEEDARIDDAVSKKETDILKV.

The protein belongs to the RRF family.

It is found in the cytoplasm. Responsible for the release of ribosomes from messenger RNA at the termination of protein biosynthesis. May increase the efficiency of translation by recycling ribosomes from one round of translation to another. This chain is Ribosome-recycling factor, found in Neorickettsia sennetsu (strain ATCC VR-367 / Miyayama) (Ehrlichia sennetsu).